We begin with the raw amino-acid sequence, 151 residues long: Extracellular globin-4 (151 aa).

Residues 6 to 151 (CCSYEDRREI…LVARIAKDLP (146 aa)) enclose the Globin domain. A disulfide bridge connects residues Cys7 and Cys138. His101 provides a ligand contact to heme b.

This sequence belongs to the globin family. The extracellular hemoglobin of the earthworm consists of 12 subunits that have a hexagonal bilayer structure with a molecular weight near 3.8 million. Each one-twelfth subunit is composed primarily of disulfide linked trimers (chains A, B, and C) and monomers (chain D).

It localises to the secreted. The chain is Extracellular globin-4 from Lumbricus terrestris (Common earthworm).